Reading from the N-terminus, the 94-residue chain is Co-chaperonin GroES (94 aa).

Belongs to the GroES chaperonin family. Heptamer of 7 subunits arranged in a ring. Interacts with the chaperonin GroEL.

It localises to the cytoplasm. Together with the chaperonin GroEL, plays an essential role in assisting protein folding. The GroEL-GroES system forms a nano-cage that allows encapsulation of the non-native substrate proteins and provides a physical environment optimized to promote and accelerate protein folding. GroES binds to the apical surface of the GroEL ring, thereby capping the opening of the GroEL channel. The chain is Co-chaperonin GroES from Heliobacterium modesticaldum (strain ATCC 51547 / Ice1).